We begin with the raw amino-acid sequence, 330 residues long: G-protein coupled receptor 74 (330 aa).

Helical transmembrane passes span 50-70, 85-105, 121-141, 160-180, 210-230, 252-272, and 295-315; these read LIVV…NLWL, FILI…IFSI, MVVF…LCFD, WVFC…QKAL, VAVS…CIFY, MLLF…LSFI, and LPLL…IYIL. Residues cysteine 117 and cysteine 195 are joined by a disulfide bond.

The protein belongs to the G-protein coupled receptor 1 family.

It localises to the host membrane. The chain is G-protein coupled receptor 74 (74) from Equus caballus (Horse).